The sequence spans 116 residues: Spexin (116 aa).

An N-terminal signal peptide occupies residues 1–26; sequence MKGPSILAVAALALLLVLSVLENSSG. Positions 27–35 are excised as a propeptide; the sequence is APQRLSEKR. Gln49 carries the post-translational modification Glutamine amide. 2 propeptides span residues 50–116 and 74–116; these read GHRF…RFYW and PNLQ…RFYW. Basic and acidic residues predominate over residues 56-73; the sequence is DQSRRKELADRPPPERRN. A disordered region spans residues 56–75; that stretch reads DQSRRKELADRPPPERRNPN.

This sequence belongs to the spexin family. In terms of tissue distribution, widely expressed; predominantly expressed in epithelial cells in the skin, respiratory, digestive, urinary and reproductive systems, retina, adrenal gland and various brain regions. In the adrenal gland, expressed in parenchymal cells of the cortex and in ganglionic cells and intermingled cortical cells of the medulla. Expressed in the type I glomic cells within the carotid body (at protein level). Widely expressed. Strongly expressed in esophagus, liver, pancreas, kidney, brain, hypothalamus, thyroid and ovary. Expressed in the zona glomerulosa (ZG) and zona fasciculata/reticularis (ZF/R) of the adrenal gland. Also expressed in stomach, lung, skeletal muscle, heart, uterus, spleen, adrenal gland and testis. Weakly expressed in small intestine, thymus, urinary bladder and adenohypophysis. In the brain, is expressed in the Barrington's nucleus, with lesser amount in the ventrolateral caudal periaqueductal gray (PAG) and in the mesopontine tegmentum.

The protein resides in the secreted. The protein localises to the extracellular space. It localises to the cytoplasmic vesicle. It is found in the secretory vesicle. Functionally, plays a role as a central modulator of cardiovascular and renal function and nociception. Also plays a role in energy metabolism and storage. Inhibits adrenocortical cell proliferation with minor stimulation on corticosteroid release. In terms of biological role, acts as a ligand for galanin receptors GALR2 and GALR3. Intracerebroventricular administration of the peptide induces an increase in arterial blood pressure, a decrease in both heart rate and renal excretion and delayed natriuresis. Intraventricular administration of the peptide induces antinociceptive activity. Intraperitoneal administration of the peptide induces a reduction in food consumption and body weight. Inhibits long chain fatty acid uptake into adipocytes. Also induces contraction of muscarinic-like stomach smooth muscles. Its function is as follows. Intracerebroventricular administration of the peptide induces a decrease in heart rate, but no change in arterial pressure, and an increase in urine flow rate. Intraventricular administration of the peptide induces antinociceptive activity. This Rattus norvegicus (Rat) protein is Spexin (SPX).